Here is a 405-residue protein sequence, read N- to C-terminus: Adenylosuccinate synthetase (405 aa).

GTP-binding positions include 12–18 (GDEGKGK) and 40–42 (GHT). Asp13 acts as the Proton acceptor in catalysis. Residues Asp13 and Gly40 each coordinate Mg(2+). Residues 13-16 (DEGK), 38-41 (NAGH), Thr121, Arg135, Gln213, Thr228, and Arg297 each bind IMP. His41 functions as the Proton donor in the catalytic mechanism. 293-299 (TTTGRPR) contributes to the substrate binding site. Residues Arg299, 325–327 (KMD), and 390–392 (SAG) contribute to the GTP site.

This sequence belongs to the adenylosuccinate synthetase family. Homodimer. Mg(2+) is required as a cofactor.

The protein localises to the cytoplasm. It carries out the reaction IMP + L-aspartate + GTP = N(6)-(1,2-dicarboxyethyl)-AMP + GDP + phosphate + 2 H(+). It functions in the pathway purine metabolism; AMP biosynthesis via de novo pathway; AMP from IMP: step 1/2. In terms of biological role, plays an important role in the de novo pathway of purine nucleotide biosynthesis. Catalyzes the first committed step in the biosynthesis of AMP from IMP. In Deinococcus radiodurans (strain ATCC 13939 / DSM 20539 / JCM 16871 / CCUG 27074 / LMG 4051 / NBRC 15346 / NCIMB 9279 / VKM B-1422 / R1), this protein is Adenylosuccinate synthetase.